Reading from the N-terminus, the 206-residue chain is Ribosomal RNA small subunit methyltransferase G (206 aa).

Residues Gly73, Leu78, 124 to 125 (VE), and Arg139 contribute to the S-adenosyl-L-methionine site.

The protein belongs to the methyltransferase superfamily. RNA methyltransferase RsmG family.

The protein localises to the cytoplasm. It carries out the reaction guanosine(527) in 16S rRNA + S-adenosyl-L-methionine = N(7)-methylguanosine(527) in 16S rRNA + S-adenosyl-L-homocysteine. Functionally, specifically methylates the N7 position of guanine in position 527 of 16S rRNA. The sequence is that of Ribosomal RNA small subunit methyltransferase G from Idiomarina loihiensis (strain ATCC BAA-735 / DSM 15497 / L2-TR).